Consider the following 638-residue polypeptide: DNA-directed RNA polymerase I subunit RPA1 (638 aa).

The span at 297-317 (EYDEEDDESSGESEVREGDEE) shows a compositional bias: acidic residues. Residues 297 to 321 (EYDEEDDESSGESEVREGDEEQEKK) are disordered.

This sequence belongs to the RNA polymerase beta' chain family. As to quaternary structure, each class of RNA polymerase is assembled from 9 to 14 different polypeptides. This subunit is the largest component of RNA polymerase I.

Its subcellular location is the nucleus. The catalysed reaction is RNA(n) + a ribonucleoside 5'-triphosphate = RNA(n+1) + diphosphate. DNA-dependent RNA polymerase catalyzes the transcription of DNA into RNA using the four ribonucleoside triphosphates as substrates. RNA polymerase I is essentially used to transcribe ribosomal DNA units. The sequence is that of DNA-directed RNA polymerase I subunit RPA1 (RPA1) from Euplotoides octocarinatus (Freshwater ciliate).